Reading from the N-terminus, the 118-residue chain is Ribonuclease P protein component (118 aa).

Belongs to the RnpA family. In terms of assembly, consists of a catalytic RNA component (M1 or rnpB) and a protein subunit.

It carries out the reaction Endonucleolytic cleavage of RNA, removing 5'-extranucleotides from tRNA precursor.. RNaseP catalyzes the removal of the 5'-leader sequence from pre-tRNA to produce the mature 5'-terminus. It can also cleave other RNA substrates such as 4.5S RNA. The protein component plays an auxiliary but essential role in vivo by binding to the 5'-leader sequence and broadening the substrate specificity of the ribozyme. The sequence is that of Ribonuclease P protein component from Shewanella frigidimarina (strain NCIMB 400).